A 214-amino-acid polypeptide reads, in one-letter code: tRNA (guanine-N(7)-)-methyltransferase (214 aa).

S-adenosyl-L-methionine is bound by residues Glu-44, Glu-69, Asp-96, and Asp-118. Asp-118 is an active-site residue. Substrate-binding positions include Lys-122, Asp-154, and 191–194 (TEYE).

It belongs to the class I-like SAM-binding methyltransferase superfamily. TrmB family.

The catalysed reaction is guanosine(46) in tRNA + S-adenosyl-L-methionine = N(7)-methylguanosine(46) in tRNA + S-adenosyl-L-homocysteine. It functions in the pathway tRNA modification; N(7)-methylguanine-tRNA biosynthesis. Functionally, catalyzes the formation of N(7)-methylguanine at position 46 (m7G46) in tRNA. This is tRNA (guanine-N(7)-)-methyltransferase from Listeria monocytogenes serotype 4b (strain F2365).